Reading from the N-terminus, the 420-residue chain is Dihydrolipoyllysine-residue succinyltransferase component of 2-oxoglutarate dehydrogenase complex (420 aa).

One can recognise a Lipoyl-binding domain in the interval 1–76 (MAEVKVPELA…EVGQAVAVVG (76 aa)). K42 is subject to N6-lipoyllysine. Residues 75–201 (VGEGQVNTSN…EKMSRRKKTA (127 aa)) are disordered. Over residues 81–90 (NTSNDSSNES) the composition is skewed to polar residues. A compositionally biased stretch (basic and acidic residues) spans 91–102 (SQKDEAKEKETP). Positions 103–127 (KQSNPNSSESENTQDNSQQRINATP) are enriched in polar residues. A Peripheral subunit-binding (PSBD) domain is found at 124–160 (NATPSARRHARKNGVDLSEVSGKGNDVLRKDDVENSQ). Residues 149 to 158 (DVLRKDDVEN) show a composition bias toward basic and acidic residues. Positions 159–188 (SQKSSSQTAKSESKSQNSGSKQSNNNPSKP) are enriched in low complexity. Residues H391 and D395 contribute to the active site.

Belongs to the 2-oxoacid dehydrogenase family. As to quaternary structure, forms a 24-polypeptide structural core with octahedral symmetry. Part of the 2-oxoglutarate dehydrogenase (OGDH) complex composed of E1 (2-oxoglutarate dehydrogenase), E2 (dihydrolipoamide succinyltransferase) and E3 (dihydrolipoamide dehydrogenase); the complex contains multiple copies of the three enzymatic components (E1, E2 and E3). The cofactor is (R)-lipoate.

The catalysed reaction is N(6)-[(R)-dihydrolipoyl]-L-lysyl-[protein] + succinyl-CoA = N(6)-[(R)-S(8)-succinyldihydrolipoyl]-L-lysyl-[protein] + CoA. It participates in amino-acid degradation; L-lysine degradation via saccharopine pathway; glutaryl-CoA from L-lysine: step 6/6. In terms of biological role, E2 component of the 2-oxoglutarate dehydrogenase (OGDH) complex which catalyzes the second step in the conversion of 2-oxoglutarate to succinyl-CoA and CO(2). The protein is Dihydrolipoyllysine-residue succinyltransferase component of 2-oxoglutarate dehydrogenase complex (odhB) of Staphylococcus epidermidis (strain ATCC 12228 / FDA PCI 1200).